The primary structure comprises 456 residues: uncharacterized protein (456 aa).

A run of 11 helical transmembrane segments spans residues 12–32, 63–83, 86–106, 143–163, 179–199, 208–228, 237–257, 305–325, 348–368, 390–410, and 414–434; these read SFIW…YLTL, FAAL…VGVA, VQAG…LGMA, WLAK…IGTF, IPVL…ILGG, SVIV…IILL, ILLI…AVGL, FLDT…TGAW, IGAT…ILGW, LAYI…IWII, and VNGL…KVII.

This sequence belongs to the alanine or glycine:cation symporter (AGCS) (TC 2.A.25) family.

Its subcellular location is the cell inner membrane. This is an uncharacterized protein from Haemophilus influenzae (strain ATCC 51907 / DSM 11121 / KW20 / Rd).